We begin with the raw amino-acid sequence, 764 residues long: Kinesin-like protein KIN-14N (764 aa).

Residues 1–50 (MSTRATRPGMLHQKENAADAQAGKRQRTAAGSAARAPLSANAAPPAPDPA) are disordered. Residues 29–50 (AAGSAARAPLSANAAPPAPDPA) show a composition bias toward low complexity. Residues 105 to 416 (AEIGKLNGLL…RLHNTILELK (312 aa)) are a coiled coil. Residues 418–747 (NIRVFCRVRP…LRFAARVNSC (330 aa)) form the Kinesin motor domain. 498-505 (GQTGSGKT) serves as a coordination point for ATP.

Belongs to the TRAFAC class myosin-kinesin ATPase superfamily. Kinesin family. KIN-14 subfamily.

The chain is Kinesin-like protein KIN-14N from Oryza sativa subsp. japonica (Rice).